A 114-amino-acid polypeptide reads, in one-letter code: Hydrogenase maturation factor HypA (114 aa).

His2 lines the Ni(2+) pocket. Residues Cys73, Cys76, Cys89, and Cys92 each coordinate Zn(2+).

It belongs to the HypA/HybF family.

Its function is as follows. Involved in the maturation of [NiFe] hydrogenases. Required for nickel insertion into the metal center of the hydrogenase. This chain is Hydrogenase maturation factor HypA, found in Syntrophus aciditrophicus (strain SB).